Consider the following 2253-residue polypeptide: Protein Ycf2 (2253 aa).

1600–1607 (GFIGTGRS) lines the ATP pocket.

It belongs to the Ycf2 family.

It localises to the plastid. The protein localises to the chloroplast stroma. Its function is as follows. Probable ATPase of unknown function. Its presence in a non-photosynthetic plant (Epifagus virginiana) and experiments in tobacco indicate that it has an essential function which is probably not related to photosynthesis. The protein is Protein Ycf2 of Nymphaea alba (White water-lily).